The following is a 700-amino-acid chain: Phenylalanine ammonia-lyase hkm12 (700 aa).

Tyr-82 acts as the Proton donor/acceptor in catalysis. The segment at residues 183–185 (ASG) is a cross-link (5-imidazolinone (Ala-Gly)). Ser-184 is subject to 2,3-didehydroalanine (Ser). 7 residues coordinate (E)-cinnamate: Asn-242, Gln-325, Arg-331, Asn-361, Lys-432, Glu-460, and Asn-463.

It belongs to the PAL/histidase family. In terms of processing, contains an active site 4-methylidene-imidazol-5-one (MIO), which is formed autocatalytically by cyclization and dehydration of residues Ala-Ser-Gly.

The enzyme catalyses L-phenylalanine = (E)-cinnamate + NH4(+). It participates in secondary metabolite biosynthesis. Functionally, phenylalanine ammonia-lyase; part of the gene cluster that mediates the biosynthesis of hancockiamides, an unusual new family of N-cinnamoylated piperazines. The NRPS hkm10 and the NmrA-like reductase hkm9 are proposed to convert two molecules of L-Phe to the intermediary piperazine called xenocockiamide A. Xenocockiamide A is then converted to hancockiamide D via a series of hydroxylations and O-methylations. The tyrosinase hkm6 may catalyze an aromatic hydroxylation, then the 2-oxoglutarate-dependent Fe(II) dioxygenase hkm4 and the FAD-dependent phenol hydroxylase hkm7 may catalyze consecutive hydroxylations to install 2 more hydroxy groups, and the methyltransferase hkm8 probably catalyzes two methylations using 2 molecules of S-adenosyl-L-methionine (SAM). The NRPS hkm11 activates and transfers trans-cinnamate supplied by the PAL hkm12 to hancockiamide D and produces hancockiamide A. NRPS Hkm11 has the flexibility to tolerate the bulky hancockiamide G as a substrate and the absence of the acetyl-transferase hkm3 opens up the opportunity for hkm11 to introduce a second N-cinnamoyl moiety. The cytochrome P450 monooxygenase hkm5 catalyzes the methylenedioxy bridge formation, converting hancockiamide A into hancockiamide G. Hkm5 can also convert hancockiamide B into hancockiamide C, and hancockiamide D into hancockiamide H. The N-acetyltransferase hkm3 finally transfers an acetyl group to 1-N of piperazine, converting hancockiamide A into hancockiamide B and hancockiamide G into hancockiamide C. In Aspergillus hancockii, this protein is Phenylalanine ammonia-lyase hkm12.